Here is a 1251-residue protein sequence, read N- to C-terminus: Immunoglobulin-like and fibronectin type III domain-containing protein 1 (1251 aa).

Positions 29 to 119 (PDFEQKPVTS…GEAACSVRLT (91 aa)) constitute an Ig-like 1 domain. Residues 61–81 (RWQNSKGDLSDSSKYKISSSP) are disordered. A coiled-coil region spans residues 188–221 (IVDYRGMLRRLQEMKKEQEDKMAQYINTISSLRH). The 90-residue stretch at 309 to 398 (PRVVVPLAET…SSAWLVVEAG (90 aa)) folds into the Ig-like 2 domain. The span at 403–433 (LQSTSADHKLQSRRSGKDGRLDIYGERRDAT) shows a compositional bias: basic and acidic residues. Residues 403-454 (LQSTSADHKLQSRRSGKDGRLDIYGERRDATRSSTSRYKPGTGSFSKDAQGP) are disordered. A compositionally biased stretch (polar residues) spans 434 to 449 (RSSTSRYKPGTGSFSK). Residues 454 to 539 (PMGHFSQGLA…GDQQSEATLT (86 aa)) form the Ig-like 3 domain. 3 Fibronectin type-III domains span residues 646–741 (PPQG…VAPE), 746–845 (APSA…MRPP), and 847–942 (LVRN…AMPV). The 85-residue stretch at 946 to 1030 (PKFLVDSSTK…LRTLQGKEVA (85 aa)) folds into the Ig-like 4 domain. In terms of domain architecture, Fibronectin type-III 4 spans 1043-1137 (APGPIHLQEN…TSQPWCIPRQ (95 aa)). Positions 1151–1245 (PDLSQKPRFL…GQAVSTATLI (95 aa)) constitute an Ig-like 5 domain.

In terms of assembly, interacts with FLNC. Interacts with KY. As to expression, expressed in skeletal muscle.

Its subcellular location is the nucleus. It is found in the cytoplasm. The protein localises to the myofibril. The protein resides in the sarcomere. It localises to the z line. This Homo sapiens (Human) protein is Immunoglobulin-like and fibronectin type III domain-containing protein 1 (IGFN1).